A 226-amino-acid chain; its full sequence is Protein pdh1 (226 aa).

A signal peptide spans 1-26; it reads MNHFSKFSVTKRLLILEVLFSAISFG. The Extracellular portion of the chain corresponds to 27–41; the sequence is ISIYIKVFGRSSIVT. A helical transmembrane segment spans residues 42 to 62; the sequence is FFLLCFHLVPNALFLFPWTII. Over 63 to 65 the chain is Cytoplasmic; sequence TTS. Residues 66 to 86 form a helical membrane-spanning segment; sequence FVDANVFTLLSSILILSVYGV. At 87-97 the chain is on the extracellular side; the sequence is EIERSWGHKEY. Residues 98–118 traverse the membrane as a helical segment; sequence LLFCQFLTVIPNIAVLIPCFI. Residues 119 to 191 lie on the Cytoplasmic side of the membrane; that stretch reads AYKITDSHYL…VFQSFPWTYF (73 aa). The chain crosses the membrane as a helical span at residues 192-212; that stretch reads CLAVSGTCISELYVLFVHPVV. At 213-226 the chain is on the extracellular side; sequence QELFHLESHTQLPI.

Its subcellular location is the membrane. The polypeptide is Protein pdh1 (pdh1) (Schizosaccharomyces pombe (strain 972 / ATCC 24843) (Fission yeast)).